Here is a 725-residue protein sequence, read N- to C-terminus: N-alpha-acetyltransferase 35, NatC auxiliary subunit (725 aa).

Residues 548-573 (ERIMEEQQKGRSSKKTKKKKKVRPLS) are disordered. Residues 558–571 (RSSKKTKKKKKVRP) are compositionally biased toward basic residues.

This sequence belongs to the MAK10 family. As to quaternary structure, component of the N-terminal acetyltransferase C (NatC) complex.

The protein resides in the cytoplasm. Auxillary component of the N-terminal acetyltransferase C (NatC) complex which catalyzes acetylation of N-terminal methionine residues. N-terminal acetylation protects proteins from ubiquitination and degradation by the N-end rule pathway. The sequence is that of N-alpha-acetyltransferase 35, NatC auxiliary subunit (NAA35) from Gallus gallus (Chicken).